Here is a 623-residue protein sequence, read N- to C-terminus: UvrABC system protein C (623 aa).

Residues 21 to 100 (AEPGVYLMRD…IKTHQPPYNV (80 aa)) form the GIY-YIG domain. The 36-residue stretch at 210 to 245 (DELIRELQEKMIQAAEQENYEAAARYRDQIRGLEQL) folds into the UVR domain.

Belongs to the UvrC family. In terms of assembly, interacts with UvrB in an incision complex.

It is found in the cytoplasm. In terms of biological role, the UvrABC repair system catalyzes the recognition and processing of DNA lesions. UvrC both incises the 5' and 3' sides of the lesion. The N-terminal half is responsible for the 3' incision and the C-terminal half is responsible for the 5' incision. The chain is UvrABC system protein C from Synechococcus sp. (strain JA-2-3B'a(2-13)) (Cyanobacteria bacterium Yellowstone B-Prime).